The sequence spans 92 residues: Defensin alpha 4 (92 aa).

A signal peptide spans 1-19 (MKTLVLLSALVLLAFQVQA). A propeptide spanning residues 20-58 (DPIQNTDEETKTEEQPGEEDQAVSISFGGQEGSALHEKS) is cleaved from the precursor. Residues 23–42 (QNTDEETKTEEQPGEEDQAV) form a disordered region. 3 cysteine pairs are disulfide-bonded: Cys64/Cys89, Cys66/Cys81, and Cys71/Cys88.

It belongs to the alpha-defensin family. In terms of tissue distribution, paneth cells of the small bowel.

The protein resides in the secreted. It localises to the cytoplasmic vesicle. It is found in the secretory vesicle. Functionally, host-defense peptide that has antimicrobial activity. Exhibits activity against Gram-negative E.coli (in vitro). Probably contributes to the antimicrobial barrier function of the small bowel mucosa. The chain is Defensin alpha 4 from Mus musculus (Mouse).